Consider the following 267-residue polypeptide: Undecaprenyl-diphosphatase 1 (267 aa).

8 consecutive transmembrane segments (helical) span residues 6–26 (VLVVALIQGLGEVLPFGAAGL), 41–60 (AALSVAAHAGILLALMIYFW), 83–103 (HLLLHVLAGTIPAAIVGWLVL), 109–129 (LVGQSGAAIILILGGVLLWGC), 142–162 (MSWVGAAGLGALQILSLVPGV), 185–205 (FSMLLAMPLILGHGVKTFWGL), 217–237 (LLMAMATAGLAALIGLAGMMA), and 244–264 (FVPFAILRIGFGIAVLGLVYF).

It belongs to the UppP family.

The protein resides in the cell inner membrane. It catalyses the reaction di-trans,octa-cis-undecaprenyl diphosphate + H2O = di-trans,octa-cis-undecaprenyl phosphate + phosphate + H(+). Functionally, catalyzes the dephosphorylation of undecaprenyl diphosphate (UPP). Confers resistance to bacitracin. In Paramagnetospirillum magneticum (strain ATCC 700264 / AMB-1) (Magnetospirillum magneticum), this protein is Undecaprenyl-diphosphatase 1.